A 262-amino-acid chain; its full sequence is Phosphatidylserine decarboxylase proenzyme (262 aa).

Residues aspartate 86, histidine 142, and serine 226 each act as charge relay system; for autoendoproteolytic cleavage activity in the active site. The Schiff-base intermediate with substrate; via pyruvic acid; for decarboxylase activity role is filled by serine 226. Serine 226 carries the pyruvic acid (Ser); by autocatalysis modification.

This sequence belongs to the phosphatidylserine decarboxylase family. PSD-B subfamily. Prokaryotic type I sub-subfamily. In terms of assembly, heterodimer of a large membrane-associated beta subunit and a small pyruvoyl-containing alpha subunit. It depends on pyruvate as a cofactor. Is synthesized initially as an inactive proenzyme. Formation of the active enzyme involves a self-maturation process in which the active site pyruvoyl group is generated from an internal serine residue via an autocatalytic post-translational modification. Two non-identical subunits are generated from the proenzyme in this reaction, and the pyruvate is formed at the N-terminus of the alpha chain, which is derived from the carboxyl end of the proenzyme. The autoendoproteolytic cleavage occurs by a canonical serine protease mechanism, in which the side chain hydroxyl group of the serine supplies its oxygen atom to form the C-terminus of the beta chain, while the remainder of the serine residue undergoes an oxidative deamination to produce ammonia and the pyruvoyl prosthetic group on the alpha chain. During this reaction, the Ser that is part of the protease active site of the proenzyme becomes the pyruvoyl prosthetic group, which constitutes an essential element of the active site of the mature decarboxylase.

It is found in the cell membrane. It carries out the reaction a 1,2-diacyl-sn-glycero-3-phospho-L-serine + H(+) = a 1,2-diacyl-sn-glycero-3-phosphoethanolamine + CO2. It participates in phospholipid metabolism; phosphatidylethanolamine biosynthesis; phosphatidylethanolamine from CDP-diacylglycerol: step 2/2. In terms of biological role, catalyzes the formation of phosphatidylethanolamine (PtdEtn) from phosphatidylserine (PtdSer). The protein is Phosphatidylserine decarboxylase proenzyme of Bacillus mycoides (strain KBAB4) (Bacillus weihenstephanensis).